The primary structure comprises 439 residues: GTPase Der (439 aa).

2 EngA-type G domains span residues 2–167 (PTVL…ESKG) and 182–358 (IRVS…KSLH). GTP-binding positions include 8-15 (GKSNVGKS), 55-59 (DTGGI), 118-121 (NKSE), 188-195 (GRPNAGKS), 235-239 (DTAGL), and 301-304 (NKID). The region spanning 359–439 (YRVQTSAVNS…PIFLKFKSRH (81 aa)) is the KH-like domain.

It belongs to the TRAFAC class TrmE-Era-EngA-EngB-Septin-like GTPase superfamily. EngA (Der) GTPase family. As to quaternary structure, associates with the 50S ribosomal subunit.

In terms of biological role, GTPase that plays an essential role in the late steps of ribosome biogenesis. The polypeptide is GTPase Der (Thermosipho africanus (strain TCF52B)).